The primary structure comprises 736 residues: Serine/threonine-protein kinase BRSK2 (736 aa).

In terms of domain architecture, Protein kinase spans 19-270; it reads YRLEKTLGKG…LEHIQKHIWY (252 aa). Residues 25 to 33 and Lys48 contribute to the ATP site; that span reads LGKGQTGLV. Residue Asp141 is the Proton acceptor of the active site. The residue at position 174 (Thr174) is a Phosphothreonine; by LKB1. Thr260 is modified (phosphothreonine; by PKA). A Phosphoserine modification is found at Ser294. The region spanning 297 to 339 is the UBA domain; it reads DIDPDVLDSMHSLGCFRDRNKLLQDLLSEEENQEKMIYFLLLD. A compositionally biased stretch (basic and acidic residues) spans 345–366; it reads PSQEDEDLPPRNEIDPPRKRVD. Disordered stretches follow at residues 345-475 and 493-513; these read PSQE…GVPW and HRRK…PESS. Ser367, Ser382, Ser393, Ser412, Ala416, Ser423, and Ser427 each carry phosphoserine. Positions 410–428 are enriched in low complexity; it reads SRSISGASSGLSTSPLSSP. The segment covering 431–445 has biased composition (pro residues); it reads TPHPSPRGSPLPTPK. Ser455 is modified (phosphoserine). Phosphothreonine is present on residues Thr459, Thr463, and Thr509. Phosphoserine is present on residues Ser512, Ser513, and Ser520. The KEN box signature appears at 603–605; that stretch reads KEN. Residues 681 to 736 are disordered; that stretch reads KNGQAAQAPSTPAKRSAHGPLGDSAAAGPGPGGDAEYPTGKDTAKMGPPTARREQP. Residues 699-708 are compositionally biased toward low complexity; sequence GPLGDSAAAG.

This sequence belongs to the protein kinase superfamily. CAMK Ser/Thr protein kinase family. SNF1 subfamily. As to quaternary structure, interacts with FZR1, a regulatory subunit of the APC ubiquitin ligase complex. Interacts with COPS5. Interacts with PAK1. The cofactor is Mg(2+). In terms of processing, phosphorylated at Thr-174 by STK11/LKB1 in complex with STE20-related adapter-alpha (STRADA) pseudo kinase and CAB39. Not phosphorylated at Thr-174 by CaMKK2. In contrast, it is phosphorylated and activated by CaMKK1. May be inactivated via dephosphorylation of Thr-174 by PP2C. Phosphorylated at Thr-260 by PKA. Phosphorylation at Thr-260 by PKA was not observed in another study, but this may reflect differences in the experimental approach. Phosphorylation at Thr-260 seems to play a role in the regulation of insulin secretion. Polyubiquitinated by the APC complex in conjunction with FZR1, leading to its proteasomal degradation. Targeted for proteasomal degradation by interaction with COPS5. BRSK2 levels change during the cell cycle. BRSK2 levels are low at the G1/S boundary and gradually increase as cells progress into G2 phase. BRSK2 levels decrease rapidly at the end of mitosis. Detected in pancreas islets (at protein level).

The protein localises to the cytoplasm. The protein resides in the cytoskeleton. It localises to the microtubule organizing center. It is found in the centrosome. Its subcellular location is the perinuclear region. The protein localises to the endoplasmic reticulum. The enzyme catalyses L-seryl-[protein] + ATP = O-phospho-L-seryl-[protein] + ADP + H(+). It catalyses the reaction L-threonyl-[protein] + ATP = O-phospho-L-threonyl-[protein] + ADP + H(+). The catalysed reaction is L-seryl-[tau protein] + ATP = O-phospho-L-seryl-[tau protein] + ADP + H(+). It carries out the reaction L-threonyl-[tau protein] + ATP = O-phospho-L-threonyl-[tau protein] + ADP + H(+). Its activity is regulated as follows. Activated by phosphorylation on Thr-174 by STK11/LKB1. In terms of biological role, serine/threonine-protein kinase that plays a key role in polarization of neurons and axonogenesis, cell cycle progress and insulin secretion. Phosphorylates CDK16, CDC25C, MAPT/TAU, PAK1 and WEE1. Following phosphorylation and activation by STK11/LKB1, acts as a key regulator of polarization of cortical neurons, probably by mediating phosphorylation of microtubule-associated proteins such as MAPT/TAU at 'Thr-529' and 'Ser-579'. Also regulates neuron polarization by mediating phosphorylation of WEE1 at 'Ser-642' in postmitotic neurons, leading to down-regulate WEE1 activity in polarized neurons. Plays a role in the regulation of the mitotic cell cycle progress and the onset of mitosis. Plays a role in the regulation of insulin secretion in response to elevated glucose levels, probably via phosphorylation of CDK16 and PAK1. While BRSK2 phosphorylated at Thr-174 can inhibit insulin secretion, BRSK2 phosphorylated at Thr-260 can promote insulin secretion. Regulates reorganization of the actin cytoskeleton. May play a role in the apoptotic response triggered by endoplasmic reticulum (ER) stress. This Homo sapiens (Human) protein is Serine/threonine-protein kinase BRSK2 (BRSK2).